A 335-amino-acid polypeptide reads, in one-letter code: Dihydroorotate dehydrogenase (quinone) (335 aa).

FMN contacts are provided by residues 59 to 63 and threonine 83; that span reads AGADK. Lysine 63 contacts substrate. Residue 108-112 participates in substrate binding; sequence NRNGF. FMN contacts are provided by asparagine 136 and asparagine 169. Asparagine 169 is a substrate binding site. The active-site Nucleophile is serine 172. A substrate-binding site is contributed by asparagine 174. The FMN site is built by lysine 214 and glycine 242. Substrate is bound at residue 243 to 244; sequence NT. Residues glycine 265, glycine 294, and 315–316 each bind FMN; that span reads YS.

It belongs to the dihydroorotate dehydrogenase family. Type 2 subfamily. In terms of assembly, monomer. FMN serves as cofactor.

The protein resides in the cell membrane. It carries out the reaction (S)-dihydroorotate + a quinone = orotate + a quinol. The protein operates within pyrimidine metabolism; UMP biosynthesis via de novo pathway; orotate from (S)-dihydroorotate (quinone route): step 1/1. Functionally, catalyzes the conversion of dihydroorotate to orotate with quinone as electron acceptor. This is Dihydroorotate dehydrogenase (quinone) from Glaesserella parasuis serovar 5 (strain SH0165) (Haemophilus parasuis).